Here is a 1371-residue protein sequence, read N- to C-terminus: Soluble scavenger receptor cysteine-rich domain-containing protein SSC5D (1371 aa).

Residues 1–16 (MRGLACLLAMLVGIQA) form the signal peptide. Residues 20-120 (LRLADGPHGC…HEEDAGVVCV (101 aa)) form the SRCR 1 domain. 3 disulfide bridges follow: cysteine 45–cysteine 109, cysteine 58–cysteine 119, and cysteine 89–cysteine 99. Over residues 143–154 (LSGELSPSSEEP) the composition is skewed to low complexity. The interval 143–200 (LSGELSPSSEEPPITHAPQPAASSQNGPRKKNPRPPKQTKSTRAPVLTNGAPHQERLR) is disordered. 2 SRCR domains span residues 199 to 299 (LRLV…LVCT) and 305 to 405 (IRLA…AVCD). 6 cysteine pairs are disulfide-bonded: cysteine 224/cysteine 288, cysteine 237/cysteine 298, cysteine 268/cysteine 278, cysteine 330/cysteine 394, cysteine 343/cysteine 404, and cysteine 374/cysteine 384. N-linked (GlcNAc...) asparagine glycosylation is found at asparagine 377 and asparagine 422. Residues 431–466 (TSVGQMPGPAGPWPPSASPTAPPEPGPEAGSPQLRL) form a disordered region. The span at 439–456 (PAGPWPPSASPTAPPEPG) shows a compositional bias: pro residues. The SRCR 4 domain maps to 464 to 565 (LRLVAGPSRC…HNEDVGVTCT (102 aa)). 3 disulfide bridges follow: cysteine 489-cysteine 554, cysteine 502-cysteine 564, and cysteine 534-cysteine 544. Residues 592 to 756 (WLPGELTTKP…AGVPVPSGPF (165 aa)) form a disordered region. Residues 599 to 611 (TKPSASLTSSVPQ) are compositionally biased toward polar residues. The span at 622–633 (KSTKKWVTKNAR) shows a compositional bias: basic residues. The segment covering 653–663 (TPTSLHPTART) has biased composition (polar residues). Over residues 665–676 (ELPKRLTTEAPH) the composition is skewed to basic and acidic residues. A compositionally biased stretch (polar residues) spans 698-740 (PVVSQSTQGPQEVTSEATTTENPQTSLEPSGENTEGSLESSQD). A compositionally biased stretch (low complexity) spans 741 to 755 (PATTPTAGVPVPSGP). Positions 758–858 (VRLADGPNRC…HEEDVVLTCT (101 aa)) constitute an SRCR 5 domain. 3 disulfides stabilise this stretch: cysteine 783–cysteine 847, cysteine 796–cysteine 857, and cysteine 827–cysteine 837. 2 disordered regions span residues 888-1270 (RPGH…PFGP) and 1351-1371 (STPVPMTTTTEEEERPLRGDV). Residues 894-912 (SWATTTNTEVPSPATQNLP) are compositionally biased toward polar residues. Low complexity-rich tracts occupy residues 936–957 (KGTPTTTKPGSTVTTSTSKSPG), 981–1004 (PTSATTSSPASSSSPEPSGSRQTS), and 1018–1035 (GTSSSPKPSLLTPGLPSP). Composition is skewed to polar residues over residues 1039–1086 (ALST…TSEL) and 1102–1148 (SSDS…NPQQ). Residues asparagine 1044 and asparagine 1131 are each glycosylated (N-linked (GlcNAc...) asparagine). A compositionally biased stretch (pro residues) spans 1149–1163 (PRSPHPATSPQPPTN). Residues 1164–1189 (THPSSTPATPTESLPSSRKTELSSPT) are compositionally biased toward polar residues. Residues 1218–1230 (ASESGPSSPSPAS) show a composition bias toward low complexity. A compositionally biased stretch (polar residues) spans 1244–1261 (RSQTLHSASDHLTQGPTP).

Interacts with LGALS1 and laminin. Partially N- and O-glycosylated. Detected throughout the gastrointestinal and genitourinary tracts, in serosal salivary gland, the exocrine part of pancreas and testis, as well as in a few tubular structures in kidney. Not detected in lung and heart (at protein level). Strongly expressed in testis, kidney and pancreas, with lower levels detected in bone marrow, spleen, lung, liver, colon, stomach and skeletal muscle. Very low levels or no expression detected in thymus, esophagus, jejunum, ileum, duodenum, ovary, uterus, heart, trachea, brain, cerebellum and bladder.

It localises to the secreted. The protein localises to the cytoplasm. Functionally, binds to extracellular matrix proteins. Binds to pathogen-associated molecular patterns (PAMPs) present on the cell walls of Gram-positive and Gram-negative bacteria and fungi, behaving as a pattern recognition receptor (PRR). Induces bacterial and fungal aggregation and subsequent inhibition of PAMP-induced cytokine release. Does not possess intrinsic bactericidal activity. May play a role in the innate defense and homeostasis of certain epithelial surfaces. In Mus musculus (Mouse), this protein is Soluble scavenger receptor cysteine-rich domain-containing protein SSC5D (Ssc5d).